Here is a 125-residue protein sequence, read N- to C-terminus: Large ribosomal subunit protein bL12 (125 aa).

Belongs to the bacterial ribosomal protein bL12 family. Homodimer. Part of the ribosomal stalk of the 50S ribosomal subunit. Forms a multimeric L10(L12)X complex, where L10 forms an elongated spine to which 2 to 4 L12 dimers bind in a sequential fashion. Binds GTP-bound translation factors.

In terms of biological role, forms part of the ribosomal stalk which helps the ribosome interact with GTP-bound translation factors. Is thus essential for accurate translation. The sequence is that of Large ribosomal subunit protein bL12 from Francisella tularensis subsp. tularensis (strain SCHU S4 / Schu 4).